The primary structure comprises 273 residues: Phosphatidylglycerol--prolipoprotein diacylglyceryl transferase (273 aa).

7 helical membrane-spanning segments follow: residues 21-41 (VSVR…LWLA), 60-80 (LLFA…VIFY), 95-115 (VWTG…AMFW), 124-144 (FFGV…MGRM), 176-196 (SQLY…NWFI), 203-223 (GAVS…VEFV), and 237-257 (ISMG…MMVW). Arg143 contacts a 1,2-diacyl-sn-glycero-3-phospho-(1'-sn-glycerol).

This sequence belongs to the Lgt family.

The protein localises to the cell inner membrane. It catalyses the reaction L-cysteinyl-[prolipoprotein] + a 1,2-diacyl-sn-glycero-3-phospho-(1'-sn-glycerol) = an S-1,2-diacyl-sn-glyceryl-L-cysteinyl-[prolipoprotein] + sn-glycerol 1-phosphate + H(+). Its pathway is protein modification; lipoprotein biosynthesis (diacylglyceryl transfer). Catalyzes the transfer of the diacylglyceryl group from phosphatidylglycerol to the sulfhydryl group of the N-terminal cysteine of a prolipoprotein, the first step in the formation of mature lipoproteins. The sequence is that of Phosphatidylglycerol--prolipoprotein diacylglyceryl transferase from Vibrio campbellii (strain ATCC BAA-1116).